The sequence spans 1241 residues: Putative urea carboxylase (1241 aa).

The Biotin carboxylation domain maps to 3–459 (ALKTLLIANR…LTKFLNNFEY (457 aa)). Residues Lys117 and Glu201 each coordinate ATP. Positions 121–321 (RELATKAGVP…LVELMLRQAD (201 aa)) constitute an ATP-grasp domain. The Biotinyl-binding domain maps to 1159 to 1239 (EELLKDPEIT…EAGKPLMLVR (81 aa)). An N6-biotinyllysine modification is found at Lys1202.

Biotin is required as a cofactor.

It catalyses the reaction urea + hydrogencarbonate + ATP = urea-1-carboxylate + ADP + phosphate + H(+). Its function is as follows. Involved in the utilization of lactams. Required for the conversion of exogenous 2-pyrrolidinone (gamma-butyrolactam) to endogenous gamma-amino-n-butyrate (GABA). The chain is Putative urea carboxylase (lamA) from Emericella nidulans (strain FGSC A4 / ATCC 38163 / CBS 112.46 / NRRL 194 / M139) (Aspergillus nidulans).